Consider the following 414-residue polypeptide: Probable 26S proteasome regulatory subunit 6B (414 aa).

202-209 (GPPGCGKT) is a binding site for ATP.

The protein belongs to the AAA ATPase family.

The protein localises to the cytoplasm. The protein resides in the nucleus. The 26S proteasome is involved in the ATP-dependent degradation of ubiquitinated proteins. The regulatory (or ATPase) complex confers ATP dependency and substrate specificity to the 26S complex. This is Probable 26S proteasome regulatory subunit 6B (rpt-3) from Caenorhabditis elegans.